The following is a 280-amino-acid chain: Bifunctional protein FolD (280 aa).

NADP(+) is bound by residues 158–160, I183, and I222; that span reads GES.

The protein belongs to the tetrahydrofolate dehydrogenase/cyclohydrolase family. In terms of assembly, homodimer.

The enzyme catalyses (6R)-5,10-methylene-5,6,7,8-tetrahydrofolate + NADP(+) = (6R)-5,10-methenyltetrahydrofolate + NADPH. It carries out the reaction (6R)-5,10-methenyltetrahydrofolate + H2O = (6R)-10-formyltetrahydrofolate + H(+). It functions in the pathway one-carbon metabolism; tetrahydrofolate interconversion. Functionally, catalyzes the oxidation of 5,10-methylenetetrahydrofolate to 5,10-methenyltetrahydrofolate and then the hydrolysis of 5,10-methenyltetrahydrofolate to 10-formyltetrahydrofolate. The protein is Bifunctional protein FolD of Mycoplasma mobile (strain ATCC 43663 / 163K / NCTC 11711) (Mesomycoplasma mobile).